A 335-amino-acid polypeptide reads, in one-letter code: Proline-rich protein 1 (335 aa).

The N-terminal stretch at 1 to 22 is a signal peptide; it reads MAITRASFAICILLSLATIATA. 39 repeat units span residues 30 to 34, 35 to 39, 40 to 43, 44 to 48, 49 to 53, 54 to 57, 58 to 62, 63 to 67, 68 to 71, 72 to 76, 77 to 81, 82 to 86, 87 to 91, 92 to 96, 97 to 101, 102 to 106, 107 to 110, 111 to 115, 116 to 120, 121 to 125, 126 to 130, 131 to 135, 136 to 139, 140 to 144, 145 to 148, 149 to 153, 154 to 158, 159 to 163, 164 to 167, 168 to 172, 173 to 177, 178 to 182, 184 to 189, 190 to 194, 195 to 200, 201 to 207, 208 to 212, 284 to 288, and 319 to 323. The interval 30–323 is 39 X 5 AA approximate repeats; sequence PPVYTSPVNK…LFNVGPFYFT (294 aa).

It belongs to the plant proline-rich protein superfamily. ENOD12 family. Exclusively expressed in roots, especially in root hairs.

Its subcellular location is the secreted. It is found in the cell wall. Its function is as follows. May contribute to cell wall structure in root hairs. The polypeptide is Proline-rich protein 1 (PRP1) (Arabidopsis thaliana (Mouse-ear cress)).